We begin with the raw amino-acid sequence, 67 residues long: Protein C' (67 aa).

This sequence belongs to the rhabdoviruses C protein family.

Functionally, seems to stimulates transcription by the viral polymerase. May play a role in viral pathogenesis or transmission by insects vectors. In Aedes (Bovine), this protein is Protein C' (P).